A 395-amino-acid chain; its full sequence is MKRVVVGLSGGVDSSVAAYLLQQQGYEVIGLFMKNWHDDSVTISNECPWLEDSNDALLVAEKLGIPFQTVDLSEEYKEKIVDYMFNEYEKGRTPNPDVLCNREIKFDVFMKIALSLGADYVATGHYCQKSEIEVDGKTVYQLIAGNDVNKDQSYFLCQLSQEQLSKALFPIGALTKPEVREIAAEMELVTAEKKDSQGLCFIGKVRLPEFLQQKLQPKEGTIVQIDKNDPIYNVEKQAGLSLEEELKIESQKLNYRPEMGKVMGKHQGAHYFTVGQRKGLNVGGTTDPLFVIATDVDTNTIYTGLTSNHPGLFKKALFVGNSEVHWVREDLKLKEGEQMEVMARIRYRQPLQKATLHQFANGMYVHFDEPQSAITEGQFVAWYLENELVGSGVIS.

ATP is bound by residues Gly-7–Ser-14 and Met-33. Residues Asn-95 to Asp-97 are interaction with target base in tRNA. Residue Cys-100 is the Nucleophile of the active site. A disulfide bridge links Cys-100 with Cys-200. Gly-124 provides a ligand contact to ATP. The tract at residues Lys-150–Gln-152 is interaction with tRNA. The active-site Cysteine persulfide intermediate is Cys-200. Positions Arg-346 to Tyr-347 are interaction with tRNA.

This sequence belongs to the MnmA/TRMU family.

It is found in the cytoplasm. The enzyme catalyses S-sulfanyl-L-cysteinyl-[protein] + uridine(34) in tRNA + AH2 + ATP = 2-thiouridine(34) in tRNA + L-cysteinyl-[protein] + A + AMP + diphosphate + H(+). In terms of biological role, catalyzes the 2-thiolation of uridine at the wobble position (U34) of tRNA, leading to the formation of s(2)U34. The sequence is that of tRNA-specific 2-thiouridylase MnmA from Flavobacterium johnsoniae (strain ATCC 17061 / DSM 2064 / JCM 8514 / BCRC 14874 / CCUG 350202 / NBRC 14942 / NCIMB 11054 / UW101) (Cytophaga johnsonae).